The following is a 629-amino-acid chain: MMWRDALSLVEEEDPHMKVSLGSSDMGVSAHLQSSKTGTTRFFTSNTHSSVVLQGFDQLRVEGLLCDVTLVPGDGDEVFPVHRAMMASASDYFKAMFTGGMKEQDLMCIKLHGVNKIGLKKIIDFIYTAKLSLNMDNLQDTLEAASFLQILPVLDFCKVFLISGVSLENCVEVGRIANTYNLTEVDKYVNNFILKNFPALLSTGEFVKLPFERLAFVLSSNSLKHCTELELFKAACRWLRFEEPRMEYAAKLMKNIRFPLMTPQDLINYVQTVDFMRTDNTCVNLLLEASNYQMMPYMQPVMQSERTAIRSDSTHLVTLGGVLRQQLVVSKELRMYDEKAHEWKSLAPMDAPRYQHGIAVIGNFLYVVGGQSNYDTKGKTAVDTVFRFDPRYNKWMQVASLNEKRTFFHLSALKGHLYAVGGRNAAGELATVECYNPRMNEWSYVAKMNEPHYGHAGTVYGGLMYISGGITHDTFQKELMCFDPDTDKWTQKAPMTTVRGLHCMCTVGDKLYVIGGNHFRGTSDYDDVLSCEYYSTTLDQWTPIAAMLRGQSDVGVAVFENKIYVVGGYSWNNRCMVEIVQKYDPEKDEWHKVFDLPESLGGIRACTLTVFPPEDNTGSPSRESPLSAP.

A BTB domain is found at C66–M135. In terms of domain architecture, BACK spans C170–Q271. Kelch repeat units follow at residues H315–N363, F364–G415, H416–G462, M464–D509, L511–N561, and K562–V610.

As to quaternary structure, component of the BCR(KLHL9-KLHL13) E3 ubiquitin ligase complex, at least composed of CUL3, KLHL9, KLHL13 and RBX1. Interacts with AURKB.

Its pathway is protein modification; protein ubiquitination. In terms of biological role, substrate-specific adapter of a BCR (BTB-CUL3-RBX1) E3 ubiquitin-protein ligase complex required for mitotic progression and cytokinesis. The BCR(KLHL9-KLHL13) E3 ubiquitin ligase complex mediates the ubiquitination of AURKB and controls the dynamic behavior of AURKB on mitotic chromosomes and thereby coordinates faithful mitotic progression and completion of cytokinesis. The polypeptide is Kelch-like protein 13 (KLHL13) (Gallus gallus (Chicken)).